The chain runs to 208 residues: Pyridoxine/pyridoxamine 5'-phosphate oxidase (208 aa).

Residues 55-60 (RMVLLK), 70-71 (YT), K76, K77, and Q99 contribute to the FMN site. K60 lines the substrate pocket. Substrate-binding residues include Y117, R121, and S125. Residues 134–135 (QS) and W179 contribute to the FMN site. Position 185–187 (185–187 (RLH)) interacts with substrate. FMN is bound at residue R189.

Belongs to the pyridoxamine 5'-phosphate oxidase family. Homodimer. Requires FMN as cofactor.

The catalysed reaction is pyridoxamine 5'-phosphate + O2 + H2O = pyridoxal 5'-phosphate + H2O2 + NH4(+). It carries out the reaction pyridoxine 5'-phosphate + O2 = pyridoxal 5'-phosphate + H2O2. It functions in the pathway cofactor metabolism; pyridoxal 5'-phosphate salvage; pyridoxal 5'-phosphate from pyridoxamine 5'-phosphate: step 1/1. Its pathway is cofactor metabolism; pyridoxal 5'-phosphate salvage; pyridoxal 5'-phosphate from pyridoxine 5'-phosphate: step 1/1. Functionally, catalyzes the oxidation of either pyridoxine 5'-phosphate (PNP) or pyridoxamine 5'-phosphate (PMP) into pyridoxal 5'-phosphate (PLP). The polypeptide is Pyridoxine/pyridoxamine 5'-phosphate oxidase (Brucella ovis (strain ATCC 25840 / 63/290 / NCTC 10512)).